The following is a 303-amino-acid chain: Paired immunoglobulin-like type 2 receptor alpha (303 aa).

The signal sequence occupies residues 1 to 19; that stretch reads MGRPLLLPLLPLLLPPAFL. Residues 20 to 197 are Extracellular-facing; the sequence is QPSGSTGSGP…DSWHISLETA (178 aa). Residues 32 to 150 enclose the Ig-like V-type domain; sequence LYGVTQPKHL…SIEGTKLSIT (119 aa). A glycan (N-linked (GlcNAc...) asparagine) is linked at N100. The chain crosses the membrane as a helical span at residues 198-218; the sequence is VGVAVAVTVLGIMILGLICLL. Residues 219–303 are Cytoplasmic-facing; the sequence is RWRRRKGQQR…NETLYSVLKA (85 aa). A disordered region spans residues 226–296; sequence QQRTKATTPA…RPLKSPQNET (71 aa). 2 short sequence motifs (ITIM motif) span residues 267–272 and 296–301; these read IVYASL and TLYSVL.

In terms of assembly, monomer. Interacts with PTPN6/SHP-1 and PTPN11/SHP-2 upon tyrosine phosphorylation. (Microbial infection) Interacts with herpes simplex virus 1 glycoprotein B. In terms of processing, according to PubMed:10660620, N- and O-glycosylated. According to PubMed:10903717, only N-glycosylated. Phosphorylated on tyrosine residues. Predominantly detected in hemopoietic tissues and is expressed by monocytes, macrophages, and granulocytes, but not by lymphocytes. Also strongly expressed by dendritic cells (DC); preferentially by CD14+/CD1a- DC derived from CD34+ progenitors. Also expressed by CD11c+ blood and tonsil DC, but not by CD11c- DC precursors.

The protein resides in the cell membrane. It is found in the secreted. In terms of biological role, paired receptors consist of highly related activating and inhibitory receptors and are widely involved in the regulation of the immune system. PILRA is thought to act as a cellular signaling inhibitory receptor by recruiting cytoplasmic phosphatases like PTPN6/SHP-1 and PTPN11/SHP-2 via their SH2 domains that block signal transduction through dephosphorylation of signaling molecules. Receptor for PIANP. Its function is as follows. (Microbial infection) Acts as an entry co-receptor for herpes simplex virus 1. This is Paired immunoglobulin-like type 2 receptor alpha (PILRA) from Homo sapiens (Human).